A 559-amino-acid polypeptide reads, in one-letter code: SH3 domain-binding protein 2 (559 aa).

In terms of domain architecture, PH spans 26-130 (GVAKAGYLHK…WMAFVRREIG (105 aa)). The interval 164-449 (LSSYPMDNED…EDSDEDYEKV (286 aa)) is disordered. Residues 170–184 (DNEDYEHEDEDDSYL) show a composition bias toward acidic residues. A phosphotyrosine; by SYK mark is found at Tyr174 and Tyr183. The SH3-binding motif lies at 201 to 210 (PPAYPPPPVP). Pro residues-rich tracts occupy residues 202 to 213 (PAYPPPPVPVPR) and 233 to 242 (PLLPPPPPKR). Residues 252–265 (EDAKDALGLRRVEP) are compositionally biased toward basic and acidic residues. Ser277 is subject to Phosphoserine. A compositionally biased stretch (low complexity) spans 313–327 (TSSVSSSTTMAVATS). Residues 360–371 (KIAEEPSPREAA) show a composition bias toward basic and acidic residues. Over residues 375–386 (PVPPVAPRPPVQ) the composition is skewed to pro residues. Ser414 and Ser425 each carry phosphoserine. Residues 437 to 446 (TGEEDSDEDY) show a composition bias toward acidic residues. Tyr446 carries the post-translational modification Phosphotyrosine; by SYK. The 99-residue stretch at 455 to 553 (VFVNTTESCE…HQSLLLRHPY (99 aa)) folds into the SH2 domain.

Post-translationally, phosphorylated. Phosphorylation at Tyr-446 may stimulate the activity of the LYN kinase.

Functionally, binds differentially to the SH3 domains of certain proteins of signal transduction pathways. Binds to phosphatidylinositols; linking the hemopoietic tyrosine kinase fes to the cytoplasmic membrane in a phosphorylation dependent mechanism. This is SH3 domain-binding protein 2 (Sh3bp2) from Mus musculus (Mouse).